We begin with the raw amino-acid sequence, 146 residues long: Hemoglobin subunit beta (146 aa).

Position 1 is an N-acetylvaline (valine 1). The region spanning 2-146 is the Globin domain; it reads HLTAEEKSAV…VANALAHKYH (145 aa). At threonine 12 the chain carries Phosphothreonine. Serine 44 is modified (phosphoserine). An N6-acetyllysine modification is found at lysine 59. Histidine 63 lines the heme b pocket. The residue at position 82 (lysine 82) is an N6-acetyllysine. Histidine 92 is a binding site for heme b. Cysteine 93 bears the S-nitrosocysteine mark. Lysine 144 carries the post-translational modification N6-acetyllysine.

It belongs to the globin family. Heterotetramer of two alpha chains and two beta chains. As to expression, red blood cells.

Functionally, involved in oxygen transport from the lung to the various peripheral tissues. This chain is Hemoglobin subunit beta (HBB), found in Leptonychotes weddellii (Weddell seal).